The sequence spans 143 residues: Transcriptional regulator SlyA (143 aa).

The HTH marR-type domain maps to 2-135 (ESTLGSDLAR…LANLIERLEQ (134 aa)). Residues 49–72 (QIQLAKAIGIEQPSLVRTLDQLED) constitute a DNA-binding region (H-T-H motif).

The protein belongs to the SlyA family. As to quaternary structure, homodimer.

Its function is as follows. Transcription regulator that can specifically activate or repress expression of target genes. This chain is Transcriptional regulator SlyA, found in Edwardsiella ictaluri (strain 93-146).